A 158-amino-acid chain; its full sequence is MSEAARETGTELGTADIQTLLELLPHRYPFLMVDRIVEIDRDESCVGIKNVTANEPQFMGHFPDMPVFPGVLLIEGMAQTAGAICCRHIRADGRNTKQVFFMTIDKCKFRKPVTPGDQVRFHMTKLNQRRTMWWFRGEARVDGTLVAEAEISAMLVTE.

His-61 is an active-site residue.

Belongs to the thioester dehydratase family. FabZ subfamily.

It is found in the cytoplasm. It carries out the reaction a (3R)-hydroxyacyl-[ACP] = a (2E)-enoyl-[ACP] + H2O. Functionally, involved in unsaturated fatty acids biosynthesis. Catalyzes the dehydration of short chain beta-hydroxyacyl-ACPs and long chain saturated and unsaturated beta-hydroxyacyl-ACPs. This chain is 3-hydroxyacyl-[acyl-carrier-protein] dehydratase FabZ, found in Methylobacterium radiotolerans (strain ATCC 27329 / DSM 1819 / JCM 2831 / NBRC 15690 / NCIMB 10815 / 0-1).